The primary structure comprises 204 residues: MAYQTREGLPNGWVAQWDERYKCYFYVNESDPKAKPQWECPVRGLTIPPPPSVDHSAPPSGPPPSYSNSAAPATPAASASSAAPAPAPAASQNRAYGAAPQPYPPQGGYPQQPYYYPNQPNYYPAQPAYAQPVYAQPATSARRGRSGVLSNPMVTGLGGLLVGGLAMHEMDEAFDRPEEVVYVDDNNYNNFDDYGGNDFGNDFF.

Positions 7–43 constitute a WW domain; that stretch reads EGLPNGWVAQWDERYKCYFYVNESDPKAKPQWECPVR. The interval 32–117 is disordered; it reads PKAKPQWECP…GYPQQPYYYP (86 aa). Low complexity-rich tracts occupy residues 66-100 and 108-117; these read YSNSAAPATPAASASSAAPAPAPAASQNRAYGAAP and GYPQQPYYYP.

The protein resides in the cytoplasm. Its subcellular location is the nucleus. This is WW domain-containing protein C11B10.08 from Schizosaccharomyces pombe (strain 972 / ATCC 24843) (Fission yeast).